Reading from the N-terminus, the 930-residue chain is A disintegrin and metalloproteinase with thrombospondin motifs 5 (930 aa).

Positions 1–21 are cleaved as a signal peptide; it reads MRLEWAPLLLLLLLLSASCLS. The propeptide occupies 22-261; the sequence is LAADSPAAAP…PQTWWRRRRR (240 aa). Low complexity predominate over residues 31-53; sequence PAQDKTRQPQAAAAAAEPDQPQG. Disordered regions lie at residues 31–68 and 207–231; these read PAQD…LAGQ and ASCE…SRRR. Residues 207 to 214 carry the Cysteine switch motif; sequence ASCETPAS. Cys209 contributes to the Zn(2+) binding site. Polar residues predominate over residues 211–225; that stretch reads TPASPSGPQESPSVH. The 210-residue stretch at 267–476 folds into the Peptidase M12B domain; the sequence is RQVELLLVAD…GHGNCLLDLP (210 aa). Intrachain disulfides connect Cys342/Cys394, Cys371/Cys376, Cys388/Cys471, Cys426/Cys455, Cys497/Cys519, Cys508/Cys529, Cys514/Cys548, and Cys542/Cys553. His410 serves as a coordination point for Zn(2+). Residue Glu411 is part of the active site. Zn(2+) is bound by residues His414 and His420. One can recognise a Disintegrin domain in the interval 485 to 566; the sequence is ELPGQTYDAT…TKKKYYSTSS (82 aa). N-linked (GlcNAc...) asparagine glycosylation occurs at Asn498. One can recognise a TSP type-1 1 domain in the interval 567–622; that stretch reads HGNWGSWGPWGQCSRSCGGGVQFAYRHCNNPAPRNSGRYCTGKRAIYRSCSVTPCP. 2 C-linked (Man) tryptophan glycosylation sites follow: Trp570 and Trp573. Intrachain disulfides connect Cys579/Cys616, Cys583/Cys621, and Cys594/Cys606. Ser582 carries an O-linked (Fuc...) serine glycan. 3 N-linked (GlcNAc...) asparagine glycosylation sites follow: Asn728, Asn802, and Asn807. The tract at residues 732 to 874 is spacer; sequence TKIIGTFNKK…HGSNKVGPHS (143 aa). Positions 875 to 929 constitute a TSP type-1 2 domain; sequence TQLQWVTGPWLACSRTCDTGWHTRTVQCQDGNRKLAKGCLLSQRPSAFKQCLLKK.

It depends on Zn(2+) as a cofactor. Post-translationally, the precursor is cleaved by furin and PCSK7 outside of the cell. In terms of processing, glycosylated. Can be O-fucosylated by POFUT2 on a serine or a threonine residue found within the consensus sequence C1-X(2)-(S/T)-C2-G of the TSP type-1 repeat domains where C1 and C2 are the first and second cysteine residue of the repeat, respectively. Fucosylated repeats can then be further glycosylated by the addition of a beta-1,3-glucose residue by the glucosyltransferase, B3GALTL. Fucosylation mediates the efficient secretion of ADAMTS family members. Can also be C-glycosylated with one or two mannose molecules on tryptophan residues within the consensus sequence W-X-X-W of the TPRs, and N-glycosylated. These other glycosylations can also facilitate secretion. As to expression, expressed in skeletal muscle.

The protein localises to the secreted. It localises to the extracellular space. The protein resides in the extracellular matrix. Functionally, metalloproteinase that plays an important role in connective tissue organization, development, inflammation and cell migration. Extracellular matrix (ECM) degrading enzyme that shows proteolytic activity toward the hyalectan group of chondroitin sulfate proteoglycans (CSPGs) including ACAN, VCAN, BCAN and NCAN. Cleavage within the hyalectans occurs at Glu-Xaa recognition motifs. Plays a role in embryonic development, including limb and cardiac morphogenesis, and skeletal muscle development through its VCAN remodeling properties. Cleaves VCAN in the pericellular matrix surrounding myoblasts, facilitating myoblast contact and fusion which is required for skeletal muscle development and regeneration. Participates in the development of brown adipose tissue and browning of white adipose tissue. Plays an important role for T-lymphocyte migration from draining lymph nodes following viral infection. The protein is A disintegrin and metalloproteinase with thrombospondin motifs 5 (Adamts5) of Mus musculus (Mouse).